Here is an 835-residue protein sequence, read N- to C-terminus: Leucine--tRNA ligase (835 aa).

A 'HIGH' region motif is present at residues 36-46 (PYPSGKIHVGH). Residues 602 to 606 (KMSKS) carry the 'KMSKS' region motif. Lysine 605 provides a ligand contact to ATP.

The protein belongs to the class-I aminoacyl-tRNA synthetase family.

The protein resides in the cytoplasm. It catalyses the reaction tRNA(Leu) + L-leucine + ATP = L-leucyl-tRNA(Leu) + AMP + diphosphate. The polypeptide is Leucine--tRNA ligase (Rickettsia felis (strain ATCC VR-1525 / URRWXCal2) (Rickettsia azadi)).